Consider the following 690-residue polypeptide: Choline transporter-like 1 (690 aa).

Residues 23-43 (IFWLVLYVVFWIALIVIAVFS) traverse the membrane as a helical segment. N-linked (GlcNAc...) asparagine glycosylation occurs at Asn134. Transmembrane regions (helical) follow at residues 203 to 223 (LYKAWPTIVLICALSLVFSIV), 237 to 259 (WLICIIVVVASVGITGVLWWSYY), 282 to 302 (ATIYVLAIAATCIMIILLVVI), and 334 to 354 (LLAFLALSVFLAFWVVVVVCL). Residue Asn391 is glycosylated (N-linked (GlcNAc...) asparagine). 4 helical membrane passes run 415-435 (IYIIGLIWTSEFIFACQQLAI), 464-484 (LGSVAKGSLIITIFKIPRLIL), 565-585 (FVLFLGKLAVASICGLISILL), and 594-614 (FYMAPVIIITVFAFFIAHIIL).

This sequence belongs to the CTL (choline transporter-like) family.

Its subcellular location is the membrane. The protein is Choline transporter-like 1 of Anopheles gambiae (African malaria mosquito).